The following is a 1117-amino-acid chain: Zinc finger E-box-binding homeobox 1 (1117 aa).

2 disordered regions span residues 1-103 (MADG…QNHD) and 122-143 (APEE…NGTP). The segment covering 15 to 30 (PRRNNVTNYNTVVEAN) has biased composition (low complexity). Residues Ser-31 and Ser-33 each carry the phosphoserine modification. A C2H2-type 1 zinc finger spans residues 150–173 (LTCPYCDRGYKRFTSLKEHIKYRH). Residues Lys-166 and Lys-175 each participate in a glycyl lysine isopeptide (Lys-Gly) (interchain with G-Cter in SUMO2) cross-link. 2 C2H2-type zinc fingers span residues 180–202 (FSCS…MTSH) and 220–242 (FKCT…LRIH). The C2H2-type 4; atypical zinc finger occupies 248-272 (YECPNCKKRFSHSGSYSSHISSKKC). The disordered stretch occupies residues 278–307 (VNGRPRSGLKTSQCSSPSLSTSPGSPTRPQ). Lys-287 participates in a covalent cross-link: Glycyl lysine isopeptide (Lys-Gly) (interchain with G-Cter in SUMO2). The span at 288-304 (TSQCSSPSLSTSPGSPT) shows a compositional bias: low complexity. Phosphoserine is present on residues Ser-293 and Ser-302. Glycyl lysine isopeptide (Lys-Gly) (interchain with G-Cter in SUMO2) cross-links involve residues Lys-311 and Lys-315. A Glycyl lysine isopeptide (Lys-Gly) (interchain with G-Cter in SUMO); alternate cross-link involves residue Lys-327. Lys-327 is covalently cross-linked (Glycyl lysine isopeptide (Lys-Gly) (interchain with G-Cter in SUMO2); alternate). Glycyl lysine isopeptide (Lys-Gly) (interchain with G-Cter in SUMO2) cross-links involve residues Lys-419, Lys-473, Lys-484, Lys-495, and Lys-528. 3 disordered regions span residues 476–501 (IPAP…TDKS), 528–566 (KHYD…SQPP), and 613–687 (GQIP…SPLN). Residues 484–501 (KSEKLPEDLTVKSETDKS) are compositionally biased toward basic and acidic residues. A DNA-binding region (homeobox; atypical) is located at residues 559–618 (DLSPSQPPLKNLLSLLKAYYALNAQPSTEELSKIADSVNLPLDGVKKWFEKMQAGQIPGQ). Residues Ser-657, Ser-664, Ser-671, and Ser-678 each carry the phosphoserine modification. A compositionally biased stretch (polar residues) spans 673–687 (MNGSRSCTSSPSPLN). Position 680 is a phosphothreonine (Thr-680). Ser-682 is modified (phosphoserine). Lys-752 is covalently cross-linked (Glycyl lysine isopeptide (Lys-Gly) (interchain with G-Cter in SUMO); alternate). A Glycyl lysine isopeptide (Lys-Gly) (interchain with G-Cter in SUMO2); alternate cross-link involves residue Lys-752. The tract at residues 834 to 876 (PPVKVIQPNGNQDERQDTSSEGVSTVEDQNDSDSTPPKKKTRK) is disordered. Residues 852–868 (SSEGVSTVEDQNDSDST) show a composition bias toward polar residues. C2H2-type zinc fingers lie at residues 882–904 (YACD…KYEH) and 910–932 (HECG…MRLH). The segment at 938 to 959 (YQCDKCGKRFSHSGSYSQHMNH) adopts a C2H2-type 7; atypical zinc-finger fold. The segment at 991–1117 (EHVGARASPS…QLSEEKTNEA (127 aa)) is disordered. 3 stretches are compositionally biased toward acidic residues: residues 1013-1032 (EEDE…MEEL), 1042-1069 (QGEE…DEAE), and 1098-1109 (SEMESESESEQL).

Belongs to the delta-EF1/ZFH-1 C2H2-type zinc-finger family. In terms of assembly, interacts (via N-terminus) with SMARCA4/BRG1. In terms of processing, ubiquitinated, leading to degradation in a proteasome-dependent manner. Deubiquitinated by USP51, leading to stabilization. As to expression, expressed in the external germinal layer (EGL) and internal granular layer (IGL) of the cerebellum (at protein level).

It localises to the nucleus. Acts as a transcriptional repressor. Binds to E-box sequences in the immunoglobulin heavy chain enhancer as well as in the regulatory regions of many other tissue-specific genes. Represses E-cadherin promoter and induces an epithelial-mesenchymal transition (EMT) by recruiting SMARCA4/BRG1. Represses BCL6 transcription in the presence of the corepressor CTBP1. Positively regulates neuronal differentiation. Represses RCOR1 transcription activation during neurogenesis. Represses transcription by binding to the E box (5'-CANNTG-3'). In the absence of TGFB1, acts as a repressor of COL1A2 transcription via binding to the E-box in the upstream enhancer region. Promotes tumorigenicity by repressing stemness-inhibiting microRNAs. In Mus musculus (Mouse), this protein is Zinc finger E-box-binding homeobox 1.